Reading from the N-terminus, the 153-residue chain is Probable phospholipase A2 homolog 2 (153 aa).

The first 25 residues, 1–25 (MRFFLKLAPRCSVLLLLLLVTASRG), serve as a signal peptide directing secretion. Disulfide bonds link Cys-42-Cys-70, Cys-46-Cys-76, Cys-51-Cys-123, Cys-63-Cys-83, Cys-82-Cys-109, and Cys-89-Cys-102. Ca(2+) is bound by residues Tyr-62, Gly-64, and Tyr-67. Residue His-86 is part of the active site. Asp-87 is a Ca(2+) binding site.

Belongs to the phospholipase A2 family. Ca(2+) serves as cofactor.

The protein localises to the secreted. The catalysed reaction is a 1,2-diacyl-sn-glycero-3-phosphocholine + H2O = a 1-acyl-sn-glycero-3-phosphocholine + a fatty acid + H(+). PA2 catalyzes the calcium-dependent hydrolysis of the 2-acyl groups in 3-sn-phosphoglycerides. Releases lysophospholipids (LPLs) and free fatty acids (FFAs) from membrane phospholipids in response to hormones and other external stimuli. The sequence is that of Probable phospholipase A2 homolog 2 (PLA2-II) from Oryza sativa subsp. japonica (Rice).